The primary structure comprises 489 residues: DBIRD complex subunit ZNF326 (489 aa).

4 disordered regions span residues 1–28, 62–100, 133–181, and 205–263; these read MDRE…EMGD, EQGH…PSFT, VGSR…RPGL, and PPFK…KNSE. The span at 7–22 shows a compositional bias: polar residues; it reads SYNQRSMDSYGNQSYS. Positions 62–76 are enriched in basic and acidic residues; it reads EQGHFGDSYDGRYEN. Polar residues predominate over residues 91 to 100; it reads GGSSWDPSFT. Residues 200–221 carry the Bipartite nuclear localization signal motif; that stretch reads KRKMAPPFKPVGVFGKKQKLSK. 2 consecutive C2H2 AKAP95-type zinc fingers follow at residues 273–295 and 365–388; these read CSFC…STTH and CSAC…SADH. Residues 431–489 are disordered; that stretch reads ETQPEEQQQEQEEEEEEEEQQEQAAVPEQDLSEEQPAAIAAEPEGEDFTCDPLTTTDEV. Over residues 433-451 the composition is skewed to acidic residues; sequence QPEEQQQEQEEEEEEEEQQ.

Belongs to the AKAP95 family. As to quaternary structure, component of the DBIRD complex.

It is found in the nucleus. In terms of biological role, core component of the DBIRD complex, a multiprotein complex that acts at the interface between core mRNP particles and RNA polymerase II (RNAPII) and integrates transcript elongation with the regulation of alternative splicing. The protein is DBIRD complex subunit ZNF326 (znf326) of Xenopus tropicalis (Western clawed frog).